Consider the following 398-residue polypeptide: Galactose-3-O-sulfotransferase 2 (398 aa).

Topologically, residues 1–10 (MMSMLGGLQR) are cytoplasmic. The chain crosses the membrane as a helical; Signal-anchor for type II membrane protein span at residues 11-31 (YFRVILLLLLALTLLLLAGFL). At 32–398 (HSDLELDTPL…PLKNIPFLGA (367 aa)) the chain is on the lumenal side. 6 N-linked (GlcNAc...) asparagine glycosylation sites follow: Asn-79, Asn-132, Asn-179, Asn-287, Asn-330, and Asn-360.

It belongs to the galactose-3-O-sulfotransferase family. Ubiquitous. Detected in heart, stomach, colon, liver and spleen, in epithelial cells lining the lower to middle layer of the crypts in colonic mucosa, hepatocytes surrounding the central vein of the liver, extravillous cytotrophoblasts in the basal plate of the septum of the placenta, renal tubules of the kidney, and neuronal cells of the cerebral cortex.

Its subcellular location is the golgi apparatus. It localises to the golgi stack membrane. It participates in protein modification; carbohydrate sulfation. With respect to regulation, strongly inhibited by Cu(2+) and Zn(2+). In terms of biological role, transfers a sulfate group to the hydroxyl group at C3 of non-reducing beta-galactosyl residues. Acts both on type 1 (Gal-beta-1,3-GlcNAc) and type 2 (Gal-beta-1,4-GlcNAc) chains with similar efficiency. The protein is Galactose-3-O-sulfotransferase 2 (GAL3ST2) of Homo sapiens (Human).